A 424-amino-acid chain; its full sequence is Exodeoxyribonuclease 7 large subunit (424 aa).

The protein belongs to the XseA family. Heterooligomer composed of large and small subunits.

It is found in the cytoplasm. The catalysed reaction is Exonucleolytic cleavage in either 5'- to 3'- or 3'- to 5'-direction to yield nucleoside 5'-phosphates.. In terms of biological role, bidirectionally degrades single-stranded DNA into large acid-insoluble oligonucleotides, which are then degraded further into small acid-soluble oligonucleotides. This Cyanothece sp. (strain PCC 7425 / ATCC 29141) protein is Exodeoxyribonuclease 7 large subunit.